A 199-amino-acid polypeptide reads, in one-letter code: Chaperone protein TorD (199 aa).

Belongs to the TorD/DmsD family. TorD subfamily.

The protein resides in the cytoplasm. In terms of biological role, involved in the biogenesis of TorA. Acts on TorA before the insertion of the molybdenum cofactor and, as a result, probably favors a conformation of the apoenzyme that is competent for acquiring the cofactor. The polypeptide is Chaperone protein TorD (Escherichia coli O8 (strain IAI1)).